Consider the following 396-residue polypeptide: Potassium channel subfamily K member 9 (396 aa).

At 1–8 (MKRQNVRT) the chain is on the cytoplasmic side. Residues 9-29 (LSLIACTFTYLLVGAAVFDAL) form a helical membrane-spanning segment. Residues 30-88 (ESDHEMREEEKLKAEEVRLRGKYNISSDDYQQLELVILQSEPHRAGVQWKFAGSFYFAI) are Extracellular-facing. Asparagine 53 carries N-linked (GlcNAc...) asparagine glycosylation. The segment at residues 89-101 (TVITTIGYGHAAP) is an intramembrane region (pore-forming). The K(+) site is built by threonine 93, isoleucine 94, glycine 95, and tyrosine 96. The tract at residues 93 to 98 (TIGYGH) is selectivity filter 1. Residues 102–107 (GTDAGK) lie on the Extracellular side of the membrane. Residues 108-128 (AFCMFYAVLGIPLTLVMFQSL) form a helical membrane-spanning segment. The Cytoplasmic portion of the chain corresponds to 129 to 158 (GERMNTFVRYLLKRIKKCCGMRNTEVSMEN). The chain crosses the membrane as a helical span at residues 159-179 (MVTVGFFSCMGTLCLGAAAFS). The Extracellular portion of the chain corresponds to 180-194 (QCEDWSFFHAYYYCF). The segment at residues 195–207 (ITLTTIGFGDFVA) is an intramembrane region (pore-forming). 4 residues coordinate K(+): threonine 199, isoleucine 200, glycine 201, and phenylalanine 202. Positions 199-204 (TIGFGD) are selectivity filter 2. Residues 208–218 (LQSKGALQRKP) are Extracellular-facing. The helical transmembrane segment at 219-239 (FYVAFSFMYILVGLTVIGAFL) threads the bilayer. Residues 240-396 (NLVVLRFLTM…HRLHIRRKSI (157 aa)) are Cytoplasmic-facing. The tract at residues 243-248 (VLRFLT) is X-gate.

This sequence belongs to the two pore domain potassium channel (TC 1.A.1.8) family. Homodimer. Heterodimer with KCNK1. Heterodimer with KCNK3. As to expression, highly expressed in the CNS and at lower levels in the colon, kidney, liver, lung, spleen, stomach and skeletal muscle. The highest expression was found in the olfactory nuclei, piriform cortex, cerebellum, antedorsal thalmic nucleus, pontine nucleus, dorsal raphe and several nuclei in the medulla. Shows a non-homogeneous distribution in the hippocampus. Expressed at highest levels in the lateral posterior and inferior portions and at medium levels in neocortex. Expressed in motoneurons, including hypoglossal motoneurons (at protein level).

The protein localises to the cell membrane. Its subcellular location is the mitochondrion inner membrane. It localises to the cell projection. The protein resides in the dendrite. It carries out the reaction K(+)(in) = K(+)(out). It catalyses the reaction Na(+)(in) = Na(+)(out). With respect to regulation, activated by halothane and isoflurane. Inhibited by external acidification, diacylglycerol, anandamide and AGT/angiotensin II. Ruthenium red inhibits homomeric but not KCNK3:KCNK9 heteromeric channels. Its function is as follows. K(+) channel that conducts voltage-dependent outward rectifying currents upon membrane depolarization. Voltage sensing is coupled to K(+) electrochemical gradient in an 'ion flux gating' mode where outward but not inward ion flow opens the gate. Changes ion selectivity and becomes permeable to Na(+) ions in response to extracellular acidification. Protonation of the pH sensor His-98 stabilizes C-type inactivation conformation likely converting the channel from outward K(+)-conducting, to inward Na(+)-conducting to nonconductive state. Homo- and heterodimerizes to form functional channels with distinct regulatory and gating properties. Allows K(+) currents with fast-gating kinetics important for the repolarization and hyperpolarization phases of action potentials. In granule neurons, hyperpolarizes the resting membrane potential to limit intrinsic neuronal excitability, but once the action potential threshold is reached, supports high-frequency action potential firing and increased neuronal excitability. Homomeric and/or heteromeric KCNK3:KCNK9 channels operate in cerebellar granule cells, whereas heteromeric KCNK1:KCNK9 enables currents in hippocampal dentate gyrus granule neurons. Dispensable for central chemosensory respiration i.e. breathing controlled by brainstem CO2/pH, it rather conducts pH-sensitive currents and controls the firing rate of serotonergic raphe neurons involved in potentiation of the respiratory chemoreflex. In retinal ganglion cells, mediates outward rectifying currents that regulate action potentials in response to acidification of the synaptic cleft. Involved in transmission of image-forming and nonimage-forming visual information in the retina. In adrenal gland, contributes to the maintenance of a hyperpolarized resting membrane potential of aldosterone-producing cells at zona glomerulosa and limits aldosterone release as part of a regulatory mechanism that controls arterial blood pressure and electrolyte homeostasis. The sequence is that of Potassium channel subfamily K member 9 from Rattus norvegicus (Rat).